The chain runs to 622 residues: DNA mismatch repair protein MutL (622 aa).

It belongs to the DNA mismatch repair MutL/HexB family.

In terms of biological role, this protein is involved in the repair of mismatches in DNA. It is required for dam-dependent methyl-directed DNA mismatch repair. May act as a 'molecular matchmaker', a protein that promotes the formation of a stable complex between two or more DNA-binding proteins in an ATP-dependent manner without itself being part of a final effector complex. The polypeptide is DNA mismatch repair protein MutL (Actinobacillus pleuropneumoniae serotype 3 (strain JL03)).